Here is a 696-residue protein sequence, read N- to C-terminus: DNA ligase (696 aa).

NAD(+)-binding positions include 43 to 47, 92 to 93, and Glu-122; these read DGEFD and SL. The N6-AMP-lysine intermediate role is filled by Lys-124. The NAD(+) site is built by Arg-145, Glu-185, Lys-301, and Lys-325. 4 residues coordinate Zn(2+): Cys-419, Cys-422, Cys-438, and Cys-444. A BRCT domain is found at 608–696; it reads SIPRNLEGLS…GPDAVAESGV (89 aa).

It belongs to the NAD-dependent DNA ligase family. LigA subfamily. The cofactor is Mg(2+). Mn(2+) is required as a cofactor.

The enzyme catalyses NAD(+) + (deoxyribonucleotide)n-3'-hydroxyl + 5'-phospho-(deoxyribonucleotide)m = (deoxyribonucleotide)n+m + AMP + beta-nicotinamide D-nucleotide.. DNA ligase that catalyzes the formation of phosphodiester linkages between 5'-phosphoryl and 3'-hydroxyl groups in double-stranded DNA using NAD as a coenzyme and as the energy source for the reaction. It is essential for DNA replication and repair of damaged DNA. The chain is DNA ligase from Rhodococcus jostii (strain RHA1).